Consider the following 176-residue polypeptide: MPVKRSLKLDDQFEENSFGPSKIMRKKSITAFSPTTGTYQLSPFSSPRTPKEQEHRDGPSNGTRKWSVLSSPARQDSTVKGSDGFMMLLSKIERSSEKTMEIMKNLSSLQALEGNRQLEDLLGVSLVPCSLKSEAKKTKELMTKVMKQKLFEKKNSRIPPKEHHPNSFEFLKAILN.

Residue lysine 8 forms a Glycyl lysine isopeptide (Lys-Gly) (interchain with G-Cter in SUMO2) linkage. Serine 17 carries the phosphoserine modification. A DD1 region spans residues 20 to 50 (PSKIMRKKSITAFSPTTGTYQLSPFSSPRTP). A Glycyl lysine isopeptide (Lys-Gly) (interchain with G-Cter in SUMO2) cross-link involves residue lysine 22. Serine 28 is modified (phosphoserine). Residues 34–48 (PTTGTYQLSPFSSPR) are compositionally biased toward polar residues. The segment at 34-80 (PTTGTYQLSPFSSPRTPKEQEHRDGPSNGTRKWSVLSSPARQDSTVK) is disordered. Residues 49-58 (TPKEQEHRDG) are compositionally biased toward basic and acidic residues. The span at 60–80 (SNGTRKWSVLSSPARQDSTVK) shows a compositional bias: polar residues. Positions 63 to 66 (TRKW) match the Nuclear localization signal motif. Residue serine 71 is modified to Phosphoserine. A coiled-coil region spans residues 82–112 (SDGFMMLLSKIERSSEKTMEIMKNLSSLQAL). Residues 118–122 (LEDLL) carry the LXXLL motif motif. Positions 171-175 (LKAIL) match the LXXIL motif motif.

Homodimer; mediated by the coiled coil domain. Interacts with CCNA2 and MTA1. Interacts with NFKB1 NF-kappa-B subunit. Component of the CENPA-CAD complex, composed of CENPI, CENPK, CENPL, CENPO, CENPP, CENPQ, CENPR and CENPS. The CENPA-CAD complex interacts with the CENPA-NAC complex, at least composed of CENPA, CENPC, CENPH, CENPM, CENPN, CENPT and CENPU. Interacts with TASOR.

The protein localises to the nucleus. The protein resides in the chromosome. It localises to the centromere. Its subcellular location is the kinetochore. Its function is as follows. Transcription coregulator that can have both coactivator and corepressor functions. Involved in the coactivation of nuclear receptors for retinoid X (RXRs) and thyroid hormone (TRs) in a ligand-dependent fashion. In contrast, it does not coactivate nuclear receptors for retinoic acid, vitamin D, progesterone receptor, nor glucocorticoid. Acts as a coactivator for estrogen receptor alpha. Acts as a transcriptional corepressor via its interaction with the NFKB1 NF-kappa-B subunit, possibly by interfering with the transactivation domain of NFKB1. Induces apoptosis in breast cancer cells, but not in other cancer cells, via a caspase-2 mediated pathway that involves mitochondrial membrane permeabilization but does not require other caspases. May also act as an inhibitor of cyclin A-associated kinase. Also acts a component of the CENPA-CAD (nucleosome distal) complex, a complex recruited to centromeres which is involved in assembly of kinetochore proteins, mitotic progression and chromosome segregation. May be involved in incorporation of newly synthesized CENPA into centromeres via its interaction with the CENPA-NAC complex. The chain is Centromere protein R (Itgb3bp) from Rattus norvegicus (Rat).